A 572-amino-acid polypeptide reads, in one-letter code: Delta-1-pyrroline-5-carboxylate dehydrogenase, mitochondrial (572 aa).

300 to 305 (GQISTR) is a binding site for NAD(+). The active-site Proton acceptor is the Glu320. Cys354 functions as the Nucleophile in the catalytic mechanism.

This sequence belongs to the aldehyde dehydrogenase family.

It is found in the mitochondrion matrix. It catalyses the reaction L-glutamate 5-semialdehyde + NAD(+) + H2O = L-glutamate + NADH + 2 H(+). The protein operates within amino-acid degradation; L-proline degradation into L-glutamate; L-glutamate from L-proline: step 2/2. The polypeptide is Delta-1-pyrroline-5-carboxylate dehydrogenase, mitochondrial (prnC) (Emericella nidulans (strain FGSC A4 / ATCC 38163 / CBS 112.46 / NRRL 194 / M139) (Aspergillus nidulans)).